The primary structure comprises 806 residues: Leucine--tRNA ligase (806 aa).

Residues 40–51 (PYPSGKGLHVGH) carry the 'HIGH' region motif. The 'KMSKS' region motif lies at 580–584 (KMSKS). Residue Lys-583 coordinates ATP.

This sequence belongs to the class-I aminoacyl-tRNA synthetase family.

It localises to the cytoplasm. The enzyme catalyses tRNA(Leu) + L-leucine + ATP = L-leucyl-tRNA(Leu) + AMP + diphosphate. This is Leucine--tRNA ligase from Ureaplasma parvum serovar 3 (strain ATCC 27815 / 27 / NCTC 11736).